A 337-amino-acid chain; its full sequence is Anthranilate phosphoribosyltransferase (337 aa).

5-phospho-alpha-D-ribose 1-diphosphate is bound by residues Gly-81, 84–85 (GD), Ser-89, 91–94 (NVST), 109–117 (KHGNRAASS), and Ala-121. Residue Gly-81 coordinates anthranilate. Ser-93 serves as a coordination point for Mg(2+). Asn-112 serves as a coordination point for anthranilate. Arg-167 is an anthranilate binding site. Residues Asp-226 and Glu-227 each coordinate Mg(2+).

It belongs to the anthranilate phosphoribosyltransferase family. Homodimer. Mg(2+) is required as a cofactor.

It catalyses the reaction N-(5-phospho-beta-D-ribosyl)anthranilate + diphosphate = 5-phospho-alpha-D-ribose 1-diphosphate + anthranilate. The protein operates within amino-acid biosynthesis; L-tryptophan biosynthesis; L-tryptophan from chorismate: step 2/5. Its function is as follows. Catalyzes the transfer of the phosphoribosyl group of 5-phosphorylribose-1-pyrophosphate (PRPP) to anthranilate to yield N-(5'-phosphoribosyl)-anthranilate (PRA). The sequence is that of Anthranilate phosphoribosyltransferase from Methylobacterium nodulans (strain LMG 21967 / CNCM I-2342 / ORS 2060).